The primary structure comprises 203 residues: Cilia- and flagella-associated protein 20 (203 aa).

Belongs to the CFAP20 family.

It is found in the nucleus. The protein resides in the cytoplasm. The protein localises to the cytoskeleton. It localises to the microtubule organizing center. Its subcellular location is the centrosome. It is found in the centriole. The protein resides in the cilium basal body. The protein localises to the cilium axoneme. In terms of biological role, cilium- and flagellum-specific protein that plays a role in axonemal structure organization and motility. Microtubule inner protein (MIP) part of the dynein-decorated doublet microtubules (DMTs) in cilia axoneme, which is required for motile cilia beating. Involved in the regulation of the size and morphology of cilia. Required for axonemal microtubules polyglutamylation. This Caenorhabditis briggsae protein is Cilia- and flagella-associated protein 20.